A 664-amino-acid polypeptide reads, in one-letter code: Two-component response regulator ARR2 (664 aa).

Residues 1–21 (MVNPGHGRGPDSGTAAGGSNS) are disordered. The Response regulatory domain maps to 29 to 144 (RVLVVDDDPT…ALKNIWQHVV (116 aa)). D80 bears the 4-aspartylphosphate mark. The tract at residues 151-215 (WNVSEHSGGS…DDKEDSSSLK (65 aa)) is disordered. Residues 165 to 178 (GGDRDRQQQHREDA) show a composition bias toward basic and acidic residues. Polar residues predominate over residues 180–191 (NNSSSVNEGNGR). A compositionally biased stretch (acidic residues) spans 200–209 (EVDDQGDDKE). Positions 215 to 218 (KKPR) match the Nuclear localization signal motif. Positions 218-268 (RVVWSVELHQQFVAAVNQLGVDKAVPKKILEMMNVPGLTRENVASHLQKYR) form a DNA-binding region, myb-like GARP. Positions 554-567 (AAFSTSEAYSSSST) are enriched in low complexity. The tract at residues 554–589 (AAFSTSEAYSSSSTQRKRRETDATVVGEHGQNLQSP) is disordered.

This sequence belongs to the ARR family. Type-B subfamily. As to quaternary structure, binds the target DNA as a monomer. Interacts with histidine-containing phosphotransfer proteins. Two-component system major event consists of a His-to-Asp phosphorelay between a sensor histidine kinase (HK) and a response regulator (RR). In plants, the His-to-Asp phosphorelay involves an additional intermediate named Histidine-containing phosphotransfer protein (HPt). This multistep phosphorelay consists of a His-Asp-His-Asp sequential transfer of a phosphate group between first a His and an Asp of the HK protein, followed by the transfer to a conserved His of the HPt protein and finally the transfer to an Asp in the receiver domain of the RR protein. Phosphorylated in response to cytokinin mediated by AHK3. In terms of tissue distribution, detected in the whole plant. Predominantly expressed in pollen.

It is found in the nucleus. Transcriptional activator that binds specifically to the DNA sequence 5'-[AG]GATT-3'. Functions as a response regulator involved in His-to-Asp phosphorelay signal transduction system. Phosphorylation of the Asp residue in the receiver domain activates the ability of the protein to promote the transcription of target genes. Could directly activate some type-A response regulators in response to cytokinins. Involved in the expression of nuclear genes for components of mitochondrial complex I. Promotes cytokinin-mediated leaf longevity. Involved in the ethylene signaling pathway in an ETR1-dependent manner and in the cytokinin signaling pathway. This Arabidopsis thaliana (Mouse-ear cress) protein is Two-component response regulator ARR2 (ARR2).